The sequence spans 361 residues: Outer mitochondrial transmembrane helix translocase (361 aa).

At 1 to 15 (MVHAETFSRPLSRNE) the chain is on the mitochondrial intermembrane side. Residues 16-32 (VVGLIFRLTIFGAVTYF) form a helical membrane-spanning segment. Topologically, residues 33 to 361 (TIKWMVDAID…QNVLTHVCLD (329 aa)) are cytoplasmic. 133–140 (GPPGCGKT) provides a ligand contact to ATP. Phosphoserine is present on serine 322.

Belongs to the AAA ATPase family. MSP1 subfamily. As to quaternary structure, interacts with GRIA2 and GRIP1 in an ATP-dependent manner. ATAD1-catalyzed ATP hydrolysis disrupts not only its binding to GRIA2 and GRIP1, but also interaction between GRIP1 and GRIA2, leading to AMPAR complex disassembly.

The protein localises to the mitochondrion outer membrane. It is found in the peroxisome membrane. Its subcellular location is the postsynaptic cell membrane. It carries out the reaction [protein]-with a C-terminal TM segment(out) + ATP + H2O = [protein]-with a C-terminal TM segment(in) + ADP + phosphate + H(+). In terms of biological role, outer mitochondrial translocase required to remove mislocalized tail-anchored transmembrane proteins on mitochondria. Specifically recognizes and binds tail-anchored transmembrane proteins: acts as a dislocase that mediates the ATP-dependent extraction of mistargeted tail-anchored transmembrane proteins from the mitochondrion outer membrane. Also plays a critical role in regulating the surface expression of AMPA receptors (AMPAR), thereby regulating synaptic plasticity and learning and memory. Required for NMDA-stimulated AMPAR internalization and inhibition of GRIA1 and GRIA2 recycling back to the plasma membrane; these activities are ATPase-dependent. This Bos taurus (Bovine) protein is Outer mitochondrial transmembrane helix translocase.